The following is an 80-amino-acid chain: RNA-binding protein KhpA (80 aa).

One can recognise a KH domain in the interval 33 to 80 (LEILQLRVASEDVGKVIGKHGRIARALRTLLSASAHASQTRYALEIID).

This sequence belongs to the KhpA RNA-binding protein family. Forms a complex with KhpB.

Its subcellular location is the cytoplasm. Its function is as follows. A probable RNA chaperone. Forms a complex with KhpB which binds to cellular RNA and controls its expression. Plays a role in peptidoglycan (PG) homeostasis and cell length regulation. This chain is RNA-binding protein KhpA, found in Treponema pallidum (strain Nichols).